The primary structure comprises 243 residues: Probable transcriptional regulatory protein Ldb0677 (243 aa).

The segment at Met1–Gly22 is disordered.

This sequence belongs to the TACO1 family.

Its subcellular location is the cytoplasm. The chain is Probable transcriptional regulatory protein Ldb0677 from Lactobacillus delbrueckii subsp. bulgaricus (strain ATCC 11842 / DSM 20081 / BCRC 10696 / JCM 1002 / NBRC 13953 / NCIMB 11778 / NCTC 12712 / WDCM 00102 / Lb 14).